The sequence spans 497 residues: Cytochrome P450 monooxygenase opdB (497 aa).

A helical membrane pass occupies residues Tyr26–Gly46. The segment at Met69–Pro90 is disordered. Residue Cys454 coordinates heme.

Heme is required as a cofactor.

It is found in the membrane. It functions in the pathway secondary metabolite biosynthesis. In terms of biological role, cytochrome P450 monooxygenase; part of the gene cluster that mediates the biosynthesis of oxopyrrolidines, polyketide-amino acid hybrid compounds with feature structures of tetramic acid. Does not seem to play a role in oxopyrrolidines A and B biosynthesis. May be involved in further modifications of these oxopyrrolidines. The sequence is that of Cytochrome P450 monooxygenase opdB from Penicillium oxalicum (strain 114-2 / CGMCC 5302) (Penicillium decumbens).